The primary structure comprises 631 residues: Pescadillo homolog (631 aa).

A BRCT domain is found at Arg321 to Leu414. Disordered stretches follow at residues His450–Thr469 and Glu489–Pro569. Phosphoserine occurs at positions 453 and 457. 2 stretches are compositionally biased toward acidic residues: residues Asp454–Thr469 and Val499–Asp524. Positions Phe510–Ser541 form a coiled coil. A compositionally biased stretch (basic and acidic residues) spans Glu525–Lys536. Positions Lys543–Leu552 are enriched in basic residues. A compositionally biased stretch (basic and acidic residues) spans His553–Leu562.

It belongs to the pescadillo family.

It is found in the nucleus. Its subcellular location is the nucleolus. The protein localises to the nucleoplasm. In terms of biological role, required for maturation of ribosomal RNAs and formation of the large ribosomal subunit. The sequence is that of Pescadillo homolog from Drosophila mojavensis (Fruit fly).